Reading from the N-terminus, the 601-residue chain is Sulfite reductase [NADPH] flavoprotein alpha-component (601 aa).

The Flavodoxin-like domain maps to 64-202 (ITLISASQTG…AAAEWRARIV (139 aa)). FMN-binding positions include 70 to 75 (SQTGNA), 117 to 120 (STQG), and 153 to 162 (LGDTSYEFFC). The FAD-binding FR-type domain maps to 236 to 450 (EEPLVASLSV…IEHNDNFRLP (215 aa)). FAD-binding positions include threonine 324, alanine 358, 388 to 391 (RLYS), 406 to 408 (TVG), and 421 to 424 (GGAS). NADP(+) is bound by residues 521–522 (SR), 527–531 (KIYVQ), and aspartate 563. Tyrosine 601 serves as a coordination point for FAD.

It belongs to the NADPH-dependent sulphite reductase flavoprotein subunit CysJ family. The protein in the N-terminal section; belongs to the flavodoxin family. This sequence in the C-terminal section; belongs to the flavoprotein pyridine nucleotide cytochrome reductase family. As to quaternary structure, alpha(8)-beta(8). The alpha component is a flavoprotein, the beta component is a hemoprotein. The cofactor is FAD. It depends on FMN as a cofactor.

It catalyses the reaction hydrogen sulfide + 3 NADP(+) + 3 H2O = sulfite + 3 NADPH + 4 H(+). It participates in sulfur metabolism; hydrogen sulfide biosynthesis; hydrogen sulfide from sulfite (NADPH route): step 1/1. Its function is as follows. Component of the sulfite reductase complex that catalyzes the 6-electron reduction of sulfite to sulfide. This is one of several activities required for the biosynthesis of L-cysteine from sulfate. The flavoprotein component catalyzes the electron flow from NADPH -&gt; FAD -&gt; FMN to the hemoprotein component. In Enterobacter sp. (strain 638), this protein is Sulfite reductase [NADPH] flavoprotein alpha-component.